Consider the following 509-residue polypeptide: Proline-rich receptor-like protein kinase PERK15 (509 aa).

A disordered region spans residues 1–44 (MSTDTIPSLSSPPAPEFPSTTPDTATSPAPSQPSIIGPSSLAPF). Topologically, residues 1-61 (MSTDTIPSLS…DGGSRNVALT (61 aa)) are extracellular. Over residues 18-34 (PSTTPDTATSPAPSQPS) the composition is skewed to low complexity. Residues 62-82 (GLITGVVLGATFVLLGVCIFV) traverse the membrane as a helical segment. Over 83-509 (CFYKRKKRKL…IEPEKNTKDT (427 aa)) the chain is Cytoplasmic. The residue at position 132 (T132) is a Phosphothreonine. One can recognise a Protein kinase domain in the interval 143-423 (FSNTNLLGQG…VRAFEGNISI (281 aa)). Residues 149 to 157 (LGQGGFGYV) and K171 contribute to the ATP site. A Phosphotyrosine modification is found at Y216. D267 serves as the catalytic Proton acceptor. Residue S300 is modified to Phosphoserine. Phosphothreonine is present on residues T301 and T306. Y314 is modified (phosphotyrosine). Residues 468–499 (FGSSECSGLTSDNGQNPSGSSSITEGQRTTQE) show a composition bias toward polar residues. Residues 468–509 (FGSSECSGLTSDNGQNPSGSSSITEGQRTTQEIEPEKNTKDT) form a disordered region.

This sequence belongs to the protein kinase superfamily. Ser/Thr protein kinase family. In terms of tissue distribution, mostly expressed in inflorescence bolts, and, to a lower extent, in flower buds and siliques.

The protein resides in the cell membrane. It carries out the reaction L-seryl-[protein] + ATP = O-phospho-L-seryl-[protein] + ADP + H(+). The catalysed reaction is L-threonyl-[protein] + ATP = O-phospho-L-threonyl-[protein] + ADP + H(+). In Arabidopsis thaliana (Mouse-ear cress), this protein is Proline-rich receptor-like protein kinase PERK15 (PERK15).